A 141-amino-acid polypeptide reads, in one-letter code: MAIILGADAHGNALKELIKSFLQEEGYDIIDVTDINSDFIDNTLAVAKAVNEAEGRLGIMVDAYGAGPFMVATKLKGMVAAEVSDERSAYMTRGHNNARMITIGAEIVGPELAKNIVKGFVTGPYDGGRHQIRVDMLNKMA.

This sequence belongs to the LacAB/RpiB family. Heteromultimeric protein consisting of LacA and LacB.

The enzyme catalyses aldehydo-D-galactose 6-phosphate = keto-D-tagatose 6-phosphate. The protein operates within carbohydrate metabolism; D-galactose 6-phosphate degradation; D-tagatose 6-phosphate from D-galactose 6-phosphate: step 1/1. This chain is Galactose-6-phosphate isomerase subunit LacA 1, found in Streptococcus pyogenes serotype M1.